A 186-amino-acid polypeptide reads, in one-letter code: Prorelaxin 1 (186 aa).

The N-terminal stretch at 1 to 22 (MSSRLLLQLLGFWLFLSQPCRA) is a signal peptide. Intrachain disulfides connect cysteine 36–cysteine 173, cysteine 48–cysteine 186, and cysteine 172–cysteine 177. Positions 58–158 (SQEEPAPLAR…LKYLGSDAQS (101 aa)) are cleaved as a propeptide — connecting peptide. Glutamine 163 carries the post-translational modification Pyrrolidone carboxylic acid.

Belongs to the insulin family. In terms of assembly, heterodimer of a B chain and an A chain linked by two disulfide bonds.

Its subcellular location is the secreted. Functionally, relaxin is an ovarian hormone that acts with estrogen to produce dilatation of the birth canal in many mammals. The protein is Prorelaxin 1 (Rln1) of Rattus norvegicus (Rat).